Reading from the N-terminus, the 937-residue chain is Isoleucine--tRNA ligase (937 aa).

The short motif at 58–68 (PYANGSIHIGH) is the 'HIGH' region element. Glu-561 contributes to the L-isoleucyl-5'-AMP binding site. The 'KMSKS' region motif lies at 602–606 (KMSKS). Residue Lys-605 participates in ATP binding. Zn(2+) contacts are provided by Cys-900, Cys-903, Cys-920, and Cys-923.

This sequence belongs to the class-I aminoacyl-tRNA synthetase family. IleS type 1 subfamily. As to quaternary structure, monomer. The cofactor is Zn(2+).

The protein resides in the cytoplasm. The catalysed reaction is tRNA(Ile) + L-isoleucine + ATP = L-isoleucyl-tRNA(Ile) + AMP + diphosphate. Functionally, catalyzes the attachment of isoleucine to tRNA(Ile). As IleRS can inadvertently accommodate and process structurally similar amino acids such as valine, to avoid such errors it has two additional distinct tRNA(Ile)-dependent editing activities. One activity is designated as 'pretransfer' editing and involves the hydrolysis of activated Val-AMP. The other activity is designated 'posttransfer' editing and involves deacylation of mischarged Val-tRNA(Ile). This Pectobacterium atrosepticum (strain SCRI 1043 / ATCC BAA-672) (Erwinia carotovora subsp. atroseptica) protein is Isoleucine--tRNA ligase.